Reading from the N-terminus, the 449-residue chain is MQVTVNEHDAVERVATATPAGNREAHAHGTDKLAIEGGRRLAGEIAVSGAKNAALPILCAGLLSAEPVRLDNVPDLKDVRTTLALLGQMGMREETDGARVVLDASRVDNPVAPYELVKTMRASILVLGPLLARFGYAKVSLPGGCAIGARPVDQHIKGLQAMGAEIHIEHGYIEARAKRLSGARIVTDMITVTGTENLLMAATLADGETVIENAAREPEVTDLAHLLVAMGAKIDGIGTDRLVIQGVERLHGATHAVIPDRIEAGTFLCAVAAAGGDVTLTGMRAHILDAVIDKLREAGATIDEGVDTLRVRMDGRPSAVAIRTSEYPAFPTDMQAQFMALNAVAQGAAQVTETIFENRFMHVQELNRLGANIAVDGNTALVTGVPKLSGASVMATDLRASASLVIAGLCAQGETLVERIYHLDRGYDRMETKLTAVGANVRRISGSEA.

Residues 1–12 (MQVTVNEHDAVE) show a composition bias toward basic and acidic residues. A disordered region spans residues 1 to 30 (MQVTVNEHDAVERVATATPAGNREAHAHGT). 51 to 52 (KN) serves as a coordination point for phosphoenolpyruvate. Arginine 121 contacts UDP-N-acetyl-alpha-D-glucosamine. Catalysis depends on cysteine 145, which acts as the Proton donor. Position 145 is a 2-(S-cysteinyl)pyruvic acid O-phosphothioketal (cysteine 145). UDP-N-acetyl-alpha-D-glucosamine contacts are provided by residues 150–154 (RPVDQ), aspartate 333, and isoleucine 355.

The protein belongs to the EPSP synthase family. MurA subfamily.

The protein resides in the cytoplasm. The enzyme catalyses phosphoenolpyruvate + UDP-N-acetyl-alpha-D-glucosamine = UDP-N-acetyl-3-O-(1-carboxyvinyl)-alpha-D-glucosamine + phosphate. It functions in the pathway cell wall biogenesis; peptidoglycan biosynthesis. Cell wall formation. Adds enolpyruvyl to UDP-N-acetylglucosamine. This is UDP-N-acetylglucosamine 1-carboxyvinyltransferase from Burkholderia pseudomallei (strain 1710b).